Reading from the N-terminus, the 358-residue chain is Nicotinate-nucleotide--dimethylbenzimidazole phosphoribosyltransferase (358 aa).

Glu313 functions as the Proton acceptor in the catalytic mechanism.

It belongs to the CobT family.

The catalysed reaction is 5,6-dimethylbenzimidazole + nicotinate beta-D-ribonucleotide = alpha-ribazole 5'-phosphate + nicotinate + H(+). It functions in the pathway nucleoside biosynthesis; alpha-ribazole biosynthesis; alpha-ribazole from 5,6-dimethylbenzimidazole: step 1/2. Its function is as follows. Catalyzes the synthesis of alpha-ribazole-5'-phosphate from nicotinate mononucleotide (NAMN) and 5,6-dimethylbenzimidazole (DMB). The polypeptide is Nicotinate-nucleotide--dimethylbenzimidazole phosphoribosyltransferase (Corynebacterium glutamicum (strain ATCC 13032 / DSM 20300 / JCM 1318 / BCRC 11384 / CCUG 27702 / LMG 3730 / NBRC 12168 / NCIMB 10025 / NRRL B-2784 / 534)).